The following is a 1060-amino-acid chain: DNA-directed RNA polymerase subunit beta (1060 aa).

It belongs to the RNA polymerase beta chain family. In plastids the minimal PEP RNA polymerase catalytic core is composed of four subunits: alpha, beta, beta', and beta''. When a (nuclear-encoded) sigma factor is associated with the core the holoenzyme is formed, which can initiate transcription.

The protein localises to the plastid. The protein resides in the chloroplast. It carries out the reaction RNA(n) + a ribonucleoside 5'-triphosphate = RNA(n+1) + diphosphate. DNA-dependent RNA polymerase catalyzes the transcription of DNA into RNA using the four ribonucleoside triphosphates as substrates. The polypeptide is DNA-directed RNA polymerase subunit beta (Helianthus annuus (Common sunflower)).